A 273-amino-acid chain; its full sequence is MTNLQDIVVNEMKVKKHIDSEQESREIIQFIKSYVQSHSFIKSLVLGISGGQDSTLTGKLAQLAVEELRNEGRDCQFIAVKLPYGVQKDAEEVEDALNFIHPDEIITVNIKPAVDQSVKSLNEAGIELTDFQRGNEKARERMKVQFSIASNRSGIVIGTDHSAENITGFYTKYGDGAADIAPIFGLNKRQGRQLLKYLNAPKHLYEKVPTADLEDDKPQLPDEEALGVTYDQIDDYLEGKHISSEARDTIENHYVKNAHKRELAYTRYTWPKN.

47–54 is a binding site for ATP; the sequence is GISGGQDS. Position 53 (aspartate 53) interacts with Mg(2+). Residue arginine 139 participates in deamido-NAD(+) binding. Position 159 (threonine 159) interacts with ATP. Glutamate 164 is a Mg(2+) binding site. Deamido-NAD(+) contacts are provided by lysine 172 and aspartate 179. Lysine 188 and threonine 210 together coordinate ATP. Position 259–260 (259–260) interacts with deamido-NAD(+); that stretch reads HK.

This sequence belongs to the NAD synthetase family. In terms of assembly, homodimer.

The catalysed reaction is deamido-NAD(+) + NH4(+) + ATP = AMP + diphosphate + NAD(+) + H(+). The protein operates within cofactor biosynthesis; NAD(+) biosynthesis; NAD(+) from deamido-NAD(+) (ammonia route): step 1/1. Functionally, catalyzes the ATP-dependent amidation of deamido-NAD to form NAD. Uses ammonia as a nitrogen source. The sequence is that of NH(3)-dependent NAD(+) synthetase from Staphylococcus haemolyticus (strain JCSC1435).